The chain runs to 337 residues: F420-dependent glucose-6-phosphate dehydrogenase (337 aa).

Residue Asp40 coordinates coenzyme F420-(gamma-Glu)n. The active-site Proton donor is His41. Coenzyme F420-(gamma-Glu)n is bound by residues Thr77 and 108 to 109; that span reads TG. The active-site Proton acceptor is Glu110. Residues Asn113, 178–179, and 181–182 each bind coenzyme F420-(gamma-Glu)n; these read GG and VV. 4 residues coordinate substrate: Thr196, Lys199, Lys260, and Arg284.

It belongs to the F420-dependent glucose-6-phosphate dehydrogenase family. Homodimer.

It carries out the reaction oxidized coenzyme F420-(gamma-L-Glu)(n) + D-glucose 6-phosphate + H(+) = 6-phospho-D-glucono-1,5-lactone + reduced coenzyme F420-(gamma-L-Glu)(n). Functionally, catalyzes the coenzyme F420-dependent oxidation of glucose 6-phosphate (G6P) to 6-phosphogluconolactone. The sequence is that of F420-dependent glucose-6-phosphate dehydrogenase from Rhodococcus hoagii (strain 103S) (Rhodococcus equi).